The following is a 281-amino-acid chain: Aldo-keto reductase MMAR_1744 (281 aa).

Tyrosine 56 acts as the Proton donor in catalysis. Residues leucine 196, isoleucine 234, serine 237, threonine 245, asparagine 246, and arginine 272 each coordinate NADPH.

This sequence belongs to the aldo/keto reductase family.

The polypeptide is Aldo-keto reductase MMAR_1744 (Mycobacterium marinum (strain ATCC BAA-535 / M)).